Reading from the N-terminus, the 346-residue chain is 3 beta-hydroxysteroid dehydrogenase/Delta 5--&gt;4-isomerase (346 aa).

The Proton acceptor role is filled by tyrosine 147. Lysine 151 contacts NAD(+).

The protein belongs to the 3-beta-HSD family.

It carries out the reaction a 3beta-hydroxy-Delta(5)-steroid + NAD(+) = a 3-oxo-Delta(5)-steroid + NADH + H(+). The enzyme catalyses a 3-oxo-Delta(5)-steroid = a 3-oxo-Delta(4)-steroid. Its pathway is lipid metabolism; steroid biosynthesis. Functionally, catalyzes the oxidative conversion of Delta(5)-ene-3-beta-hydroxy steroid, and the oxidative conversion of ketosteroids. The 3-beta-HSD enzymatic system plays a crucial role in the biosynthesis of all classes of hormonal steroids. During viral infection, steroid production contributes to virulence by inhibiting the host inflammatory response. This is 3 beta-hydroxysteroid dehydrogenase/Delta 5--&gt;4-isomerase (OPG174) from Homo sapiens (Human).